The sequence spans 181 residues: ATP-dependent protease subunit HslV (181 aa).

The active site involves T7. The Na(+) site is built by A162, C165, and T168.

This sequence belongs to the peptidase T1B family. HslV subfamily. In terms of assembly, a double ring-shaped homohexamer of HslV is capped on each side by a ring-shaped HslU homohexamer. The assembly of the HslU/HslV complex is dependent on binding of ATP.

It is found in the cytoplasm. It catalyses the reaction ATP-dependent cleavage of peptide bonds with broad specificity.. Allosterically activated by HslU binding. Functionally, protease subunit of a proteasome-like degradation complex believed to be a general protein degrading machinery. This chain is ATP-dependent protease subunit HslV, found in Coxiella burnetii (strain RSA 493 / Nine Mile phase I).